Here is a 245-residue protein sequence, read N- to C-terminus: DNA repair protein RecO (245 aa).

The protein belongs to the RecO family.

Functionally, involved in DNA repair and RecF pathway recombination. This is DNA repair protein RecO from Pectobacterium atrosepticum (strain SCRI 1043 / ATCC BAA-672) (Erwinia carotovora subsp. atroseptica).